We begin with the raw amino-acid sequence, 451 residues long: tRNA-2-methylthio-N(6)-dimethylallyladenosine synthase (451 aa).

The MTTase N-terminal domain occupies 18-134; the sequence is ARVYLETYGC…LPNLLDLAES (117 aa). Residues Cys27, Cys63, Cys97, Cys170, Cys174, and Cys177 each contribute to the [4Fe-4S] cluster site. Positions 156–386 constitute a Radical SAM core domain; that stretch reads RKNGHSAFLA…IALQQKISAE (231 aa). The region spanning 389–451 is the TRAM domain; that stretch reads RNDIGNTHEV…TSATLIGNAL (63 aa).

This sequence belongs to the methylthiotransferase family. MiaB subfamily. Monomer. [4Fe-4S] cluster is required as a cofactor.

The protein resides in the cytoplasm. It catalyses the reaction N(6)-dimethylallyladenosine(37) in tRNA + (sulfur carrier)-SH + AH2 + 2 S-adenosyl-L-methionine = 2-methylsulfanyl-N(6)-dimethylallyladenosine(37) in tRNA + (sulfur carrier)-H + 5'-deoxyadenosine + L-methionine + A + S-adenosyl-L-homocysteine + 2 H(+). Catalyzes the methylthiolation of N6-(dimethylallyl)adenosine (i(6)A), leading to the formation of 2-methylthio-N6-(dimethylallyl)adenosine (ms(2)i(6)A) at position 37 in tRNAs that read codons beginning with uridine. This chain is tRNA-2-methylthio-N(6)-dimethylallyladenosine synthase, found in Chloroherpeton thalassium (strain ATCC 35110 / GB-78).